The sequence spans 652 residues: Acetyl-coenzyme A synthetase (652 aa).

CoA-binding positions include 191-194, T311, and N335; that span reads RAGR. ATP-binding positions include 387–389, 411–416, D500, and R515; these read GEP and DTWWQT. S523 lines the CoA pocket. Position 526 (R526) interacts with ATP. V537, H539, and I542 together coordinate Mg(2+). R584 serves as a coordination point for CoA. The residue at position 609 (K609) is an N6-acetyllysine; by Pat.

It belongs to the ATP-dependent AMP-binding enzyme family. Monomer. Mg(2+) serves as cofactor. In terms of processing, acetylated. Deacetylation by the SIR2-homolog deacetylase activates the enzyme.

It carries out the reaction acetate + ATP + CoA = acetyl-CoA + AMP + diphosphate. Catalyzes the conversion of acetate into acetyl-CoA (AcCoA), an essential intermediate at the junction of anabolic and catabolic pathways. Acs undergoes a two-step reaction. In the first half reaction, Acs combines acetate with ATP to form acetyl-adenylate (AcAMP) intermediate. In the second half reaction, it can then transfer the acetyl group from AcAMP to the sulfhydryl group of CoA, forming the product AcCoA. Required for acetate recapture but not for acetate excretion when this organism is grown on ethanolamine. Its function is as follows. Enables the cell to use acetate during aerobic growth to generate energy via the TCA cycle, and biosynthetic compounds via the glyoxylate shunt. Acetylates CheY, the response regulator involved in flagellar movement and chemotaxis. The sequence is that of Acetyl-coenzyme A synthetase from Salmonella typhimurium (strain LT2 / SGSC1412 / ATCC 700720).